The sequence spans 404 residues: Lissencephaly-1 homolog (404 aa).

In terms of domain architecture, LisH spans 7–39; sequence QKEEINRAIAEYMQNNGYSESFSVFLKESSLSE. Positions 54 to 81 form a coiled coil; the sequence is TTVLRLQRKVNDLESKLQESQREINHGA. Residues 69–89 are compositionally biased toward basic and acidic residues; that stretch reads KLQESQREINHGAPTRDKRQA. Positions 69-90 are disordered; sequence KLQESQREINHGAPTRDKRQAA. WD repeat units follow at residues 104–145, 146–185, 189–228, 231–270, 273–327, 330–369, and 372–404; these read GHRL…RTLK, GHTDAVNDIAIDAAGKQLVSCSSDLSIKLWDFGQTYDCLK, GHEHTVSSVTFLPTGDFVLSASRDHTIKQWDISTGYCVYT, GHNDWVRMIRISNDGTLFASASLDQTVTVWSFATKSAKLV, DHEH…VLFT, AHENWVRGLAFHPKGKYLISVADDKTLRVWELSAQRCMKA, and AHEHFVSTVAFHQTSPFVITGSVDMSCKVWECR.

The protein belongs to the WD repeat LIS1/nudF family. Component of a dynein-regulating complex composed of at least lis-1 and nud-2. Interacts with nud-2; the interaction is direct. Expressed in all classes of neurons in the ventral cord. Expressed in the multinucleate spermathecal valves and adult seam cells.

The protein localises to the cytoplasm. The protein resides in the cytoskeleton. It is found in the microtubule organizing center. It localises to the centrosome. Its subcellular location is the chromosome. The protein localises to the centromere. The protein resides in the kinetochore. It is found in the nucleus envelope. Positively regulates the activity of the minus-end directed microtubule motor protein dynein. May enhance dynein-mediated microtubule sliding by targeting dynein to the microtubule plus end. Required for several dynein- and microtubule-dependent processes such as nuclear migration during cell division. Part of a complex with nud-2, which is recruited to the nuclear envelope by unc-83, where, in turn, it recruits dynein to the nuclear surface and regulates nuclear migration in hypodermal precursor cells. Plays a role in GABAergic synaptic vesicle localization in the ventral nerve cord. Required for neuronal cell differentiation. The protein is Lissencephaly-1 homolog of Caenorhabditis elegans.